Reading from the N-terminus, the 146-residue chain is MGFLRRLIYRRRPMIYVESSEESSDEQPDEVESPTQSQDSTPAEEREDEGASAAQGQEPEADSQELVQPKTGCELGDGPDTKRVCLRNEEQMKLPAEGPEPEADSQEQVHPKTGCERGDGPDVQELGLPNPEEVKTPEEDEGQSQP.

A disordered region spans residues 16–146; sequence YVESSEESSD…PEEDEGQSQP (131 aa). The segment covering 19 to 32 has biased composition (acidic residues); that stretch reads SSEESSDEQPDEVE. Serine 63 is modified (phosphoserine). The span at 79–92 shows a compositional bias: basic and acidic residues; the sequence is PDTKRVCLRNEEQM. Phosphoserine is present on serine 105. The segment covering 107-120 has biased composition (basic and acidic residues); sequence EQVHPKTGCERGDG. Position 144 is a phosphoserine (serine 144).

Belongs to the GAGE family. In terms of tissue distribution, isolated from prostate cancer cell lines; expression associated with progression to androgen insensitive phenotype. Expressed in normal testis and at lower level in normal placenta.

The sequence is that of P antigen family member 1 (PAGE1) from Homo sapiens (Human).